A 428-amino-acid chain; its full sequence is Enolase (428 aa).

Gln162 contributes to the (2R)-2-phosphoglycerate binding site. The active-site Proton donor is Glu204. Residues Asp241, Glu283, and Asp310 each contribute to the Mg(2+) site. 4 residues coordinate (2R)-2-phosphoglycerate: Lys335, Arg364, Ser365, and Lys386. Lys335 (proton acceptor) is an active-site residue.

The protein belongs to the enolase family. Requires Mg(2+) as cofactor.

Its subcellular location is the cytoplasm. It localises to the secreted. The protein resides in the cell surface. It carries out the reaction (2R)-2-phosphoglycerate = phosphoenolpyruvate + H2O. Its pathway is carbohydrate degradation; glycolysis; pyruvate from D-glyceraldehyde 3-phosphate: step 4/5. Catalyzes the reversible conversion of 2-phosphoglycerate (2-PG) into phosphoenolpyruvate (PEP). It is essential for the degradation of carbohydrates via glycolysis. This Rhodococcus opacus (strain B4) protein is Enolase.